Here is a 28-residue protein sequence, read N- to C-terminus: Conotoxin Vi14b (28 aa).

Intrachain disulfides connect cysteine 4-cysteine 21 and cysteine 7-cysteine 18. N6-acetyllysine is present on residues lysine 15 and lysine 25.

Post-translationally, the two N6-acetyllysines at position 15 and 25 have been deduced from the mass difference of 42. They are not common in venom proteins. In terms of tissue distribution, expressed by the venom gland.

Its subcellular location is the secreted. Its function is as follows. In vitro, inhibits proliferation of the mice ovarian cancer cells ID8. This chain is Conotoxin Vi14b, found in Conus virgo (Virgin cone).